The chain runs to 153 residues: Small ribosomal subunit protein uS13 (153 aa).

The interval 129–153 (RGQRTKSTFRHGSSVGVSRTRPTGN) is disordered. The segment covering 143 to 153 (VGVSRTRPTGN) has biased composition (polar residues).

This sequence belongs to the universal ribosomal protein uS13 family. As to quaternary structure, part of the 30S ribosomal subunit. Forms a loose heterodimer with protein S19. Forms two bridges to the 50S subunit in the 70S ribosome.

Its function is as follows. Located at the top of the head of the 30S subunit, it contacts several helices of the 16S rRNA. In the 70S ribosome it contacts the 23S rRNA (bridge B1a) and protein L5 of the 50S subunit (bridge B1b), connecting the 2 subunits; these bridges are implicated in subunit movement. This is Small ribosomal subunit protein uS13 from Methanosphaera stadtmanae (strain ATCC 43021 / DSM 3091 / JCM 11832 / MCB-3).